A 509-amino-acid polypeptide reads, in one-letter code: Legumin A (509 aa).

A signal peptide spans 1-21 (MAINPSLLFLSLLFLFNGCLA). Cystine bridges form between cysteine 34–cysteine 67 and cysteine 110–cysteine 331. One can recognise a Cupin type-1 1 domain in the interval 39 to 273 (LRASAPQTRI…AFNVDHDIIR (235 aa)). Disordered regions lie at residues 187–248 (AGNP…ESSS) and 298–325 (PRMEEEEREERQQEQRYRHTRGGSQDNG). Residues 212 to 228 (EESEEEEGEGEEEEEED) show a composition bias toward acidic residues. Basic and acidic residues predominate over residues 299 to 314 (RMEEEEREERQQEQRY). In terms of domain architecture, Cupin type-1 2 spans 337 to 486 (ENLADPERAD…SYQVSREDAR (150 aa)).

Belongs to the 11S seed storage protein (globulins) family. In terms of assembly, hexamer; each subunit is composed of an acidic and a basic chain derived from a single precursor and linked by a disulfide bond.

Functionally, this is a seed storage protein. In Gossypium hirsutum (Upland cotton), this protein is Legumin A (LEGA).